The sequence spans 213 residues: 3-demethoxyubiquinol 3-hydroxylase (213 aa).

Fe cation contacts are provided by E62, E92, H95, E144, E176, and H179.

This sequence belongs to the COQ7 family. The cofactor is Fe cation.

Its subcellular location is the cell membrane. It carries out the reaction a 5-methoxy-2-methyl-3-(all-trans-polyprenyl)benzene-1,4-diol + AH2 + O2 = a 3-demethylubiquinol + A + H2O. It functions in the pathway cofactor biosynthesis; ubiquinone biosynthesis. Catalyzes the hydroxylation of 2-nonaprenyl-3-methyl-6-methoxy-1,4-benzoquinol during ubiquinone biosynthesis. The protein is 3-demethoxyubiquinol 3-hydroxylase of Legionella pneumophila (strain Corby).